A 380-amino-acid chain; its full sequence is WAT1-related protein At2g37460 (380 aa).

The next 10 helical transmembrane spans lie at 16–36 (FISM…SKAV), 45–65 (VLVV…AFYF), 71–91 (PKMT…EPVI), 107–127 (FATA…YIFG), 142–162 (VVGT…KGPV), 187–207 (GAVL…LQAI), 216–236 (LSLT…VALV), 254–274 (LTAT…GGVV), 282–302 (FVTA…TIIF), and 306–326 (MYLG…LVIW). One can recognise an EamA 1 domain in the interval 27-134 (AGMDILSKAV…IFGLERVKLR (108 aa)). Positions 196–325 (FSYACFMILQ…VICAGLYLVI (130 aa)) constitute an EamA 2 domain.

Belongs to the drug/metabolite transporter (DMT) superfamily. Plant drug/metabolite exporter (P-DME) (TC 2.A.7.4) family.

Its subcellular location is the membrane. The protein is WAT1-related protein At2g37460 of Arabidopsis thaliana (Mouse-ear cress).